The chain runs to 62 residues: Arabinogalactan protein 40 (62 aa).

Positions 1–22 (MEMKNIFVALFISAVLVSSVSA) are cleaved as a signal peptide. Pro-28, Pro-30, and Pro-32 each carry 4-hydroxyproline. 3 O-linked (Ara...) hydroxyproline glycosylation sites follow: Pro-28, Pro-30, and Pro-32. Ser-35 is lipidated: GPI-anchor amidated serine. Residues 36–62 (SASTVAFPVVGSIVAASLSAFLALLLQ) constitute a propeptide, removed in mature form.

Belongs to the AG-peptide AGP family. In terms of processing, contains 4-hydroxyproline; hydroxylated on Pro-28, Pro-30 and Pro-32. O-glycosylated on hydroxyprolines; noncontiguous hydroxylproline residues are glycosylated with arabinogalactan.

The protein resides in the cell membrane. In terms of biological role, proteoglycan that seems to be implicated in diverse developmental roles such as differentiation, cell-cell recognition, embryogenesis and programmed cell death. This chain is Arabinogalactan protein 40, found in Arabidopsis thaliana (Mouse-ear cress).